We begin with the raw amino-acid sequence, 37 residues long: M-oxotoxin-Ot2a (37 aa).

In terms of tissue distribution, expressed by the venom gland.

The protein localises to the secreted. Functionally, disrupts biological membranes, particularly those rich in phosphocholine. Has antimicrobial activity against Gram-negative bacterium E.coli, Gram-positive bacteria B.subtilis and S.aureus, and hemolytic activity against sheep, pig and guinea pig red blood cells. Has insecticidal activity against S.frugiperda ovarian cells by opening non-selective ion channels. Enhances the insecticidal activity of spider venom neurotoxic peptides. This chain is M-oxotoxin-Ot2a, found in Oxyopes takobius (Lynx spider).